The primary structure comprises 312 residues: Olfactory receptor 6C70 (312 aa).

The Extracellular portion of the chain corresponds to 1-22 (MKNHTRQIEFILLGLTDNSQLQ). Residue Asn-3 is glycosylated (N-linked (GlcNAc...) asparagine). A helical membrane pass occupies residues 23-43 (IVIFLFLLLNCVLSMIGNFTI). Topologically, residues 44–63 (IALILLDSQLKTPMYFFLRN) are cytoplasmic. A helical membrane pass occupies residues 64–84 (FSFLEISFTTACIPRFLITIV). Residues 85-95 (TREKTISCNGC) are Extracellular-facing. An intrachain disulfide couples Cys-95 to Cys-177. A helical transmembrane segment spans residues 96 to 116 (ISQLFFYIFLGVTEFFLLAAL). The Cytoplasmic portion of the chain corresponds to 117 to 141 (SYDRYVAICKPLRYMSIMSNKVCYQ). The chain crosses the membrane as a helical span at residues 142-162 (LVFSSWVTGFLIIFTPLILGL). Topologically, residues 163–194 (NLDFCASNIIDHFICDISLILQLSCSDTHLLE) are extracellular. A helical membrane pass occupies residues 195–215 (LIAFLLAVMTLIVTLFLVILS). At 216–237 (YSYIIKTILKFPSAQQKKKAFS) the chain is on the cytoplasmic side. A helical membrane pass occupies residues 238–258 (TCSSHMIVVSITYGSCMFIYI). Residues 259-272 (KPSANERVALSKGV) lie on the Extracellular side of the membrane. A helical membrane pass occupies residues 273–290 (TVLNTSVAPLLNPFIYTL). Residues 291–312 (RNQQVKQAFKAVFRKIFSASDK) are Cytoplasmic-facing.

This sequence belongs to the G-protein coupled receptor 1 family.

The protein resides in the cell membrane. Odorant receptor. This is Olfactory receptor 6C70 (OR6C70) from Homo sapiens (Human).